A 496-amino-acid chain; its full sequence is UDP-N-acetylmuramoyl-L-alanyl-D-glutamate--2,6-diaminopimelate ligase (496 aa).

A UDP-N-acetyl-alpha-D-muramoyl-L-alanyl-D-glutamate-binding site is contributed by Ser-32. 116-122 (GTNGKTT) is a binding site for ATP. UDP-N-acetyl-alpha-D-muramoyl-L-alanyl-D-glutamate contacts are provided by residues 158 to 159 (TT), Ser-185, Gln-191, and Arg-193. At Lys-225 the chain carries N6-carboxylysine. Meso-2,6-diaminopimelate is bound by residues Arg-389, 413 to 416 (DNPR), Gly-464, and Glu-468. The Meso-diaminopimelate recognition motif motif lies at 413 to 416 (DNPR).

The protein belongs to the MurCDEF family. MurE subfamily. Mg(2+) is required as a cofactor. Post-translationally, carboxylation is probably crucial for Mg(2+) binding and, consequently, for the gamma-phosphate positioning of ATP.

The protein localises to the cytoplasm. The enzyme catalyses UDP-N-acetyl-alpha-D-muramoyl-L-alanyl-D-glutamate + meso-2,6-diaminopimelate + ATP = UDP-N-acetyl-alpha-D-muramoyl-L-alanyl-gamma-D-glutamyl-meso-2,6-diaminopimelate + ADP + phosphate + H(+). Its pathway is cell wall biogenesis; peptidoglycan biosynthesis. In terms of biological role, catalyzes the addition of meso-diaminopimelic acid to the nucleotide precursor UDP-N-acetylmuramoyl-L-alanyl-D-glutamate (UMAG) in the biosynthesis of bacterial cell-wall peptidoglycan. The polypeptide is UDP-N-acetylmuramoyl-L-alanyl-D-glutamate--2,6-diaminopimelate ligase (Nostoc sp. (strain PCC 7120 / SAG 25.82 / UTEX 2576)).